Here is a 66-residue protein sequence, read N- to C-terminus: MSGKKSGLPDGRIPDRLPDGRPAVAWRSRWTEGTLPLWLVATAGGMAVLFVVGLFFYGSYTGVGSA.

The helical transmembrane segment at 37–57 threads the bilayer; that stretch reads LWLVATAGGMAVLFVVGLFFY.

The protein belongs to the PsbJ family. As to quaternary structure, PSII is composed of 1 copy each of membrane proteins PsbA, PsbB, PsbC, PsbD, PsbE, PsbF, PsbH, PsbI, PsbJ, PsbK, PsbL, PsbM, PsbT, PsbX, PsbY, PsbZ, Psb30/Ycf12, peripheral proteins PsbO, CyanoQ (PsbQ), PsbU, PsbV and a large number of cofactors. It forms dimeric complexes.

Its subcellular location is the cellular thylakoid membrane. Functionally, one of the components of the core complex of photosystem II (PSII). PSII is a light-driven water:plastoquinone oxidoreductase that uses light energy to abstract electrons from H(2)O, generating O(2) and a proton gradient subsequently used for ATP formation. It consists of a core antenna complex that captures photons, and an electron transfer chain that converts photonic excitation into a charge separation. The polypeptide is Photosystem II reaction center protein J (Synechococcus sp. (strain WH7803)).